Consider the following 483-residue polypeptide: 6-phosphogluconate dehydrogenase, decarboxylating (483 aa).

NADP(+) is bound by residues 10-15 (GLAVMG) and 33-35 (NRT). Lysine 38 carries the post-translational modification N6-acetyllysine. Serine 57 carries the phosphoserine modification. N6-acetyllysine is present on lysine 59. Residues 75–77 (VKA) and asparagine 103 contribute to the NADP(+) site. Substrate-binding positions include asparagine 103 and 129–131 (SGG). Phosphoserine is present on serine 129. Lysine 184 functions as the Proton acceptor in the catalytic mechanism. 187–188 (HN) lines the substrate pocket. Residue glutamate 191 is the Proton donor of the active site. Residues tyrosine 192, lysine 261, arginine 288, arginine 447, and histidine 453 each contribute to the substrate site. 478-481 (SSSY) contacts NADP(+).

The protein belongs to the 6-phosphogluconate dehydrogenase family. Homodimer.

The protein localises to the cytoplasm. It catalyses the reaction 6-phospho-D-gluconate + NADP(+) = D-ribulose 5-phosphate + CO2 + NADPH. The protein operates within carbohydrate degradation; pentose phosphate pathway; D-ribulose 5-phosphate from D-glucose 6-phosphate (oxidative stage): step 3/3. Its function is as follows. Catalyzes the oxidative decarboxylation of 6-phosphogluconate to ribulose 5-phosphate and CO(2), with concomitant reduction of NADP to NADPH. This is 6-phosphogluconate dehydrogenase, decarboxylating from Rattus norvegicus (Rat).